Reading from the N-terminus, the 376-residue chain is uncharacterized protein (376 aa).

Belongs to the YCR102c/YLR460c/YNL134c family.

This is an uncharacterized protein from Saccharomyces cerevisiae (strain ATCC 204508 / S288c) (Baker's yeast).